Reading from the N-terminus, the 635-residue chain is Biosynthetic arginine decarboxylase (635 aa).

Residue Lys-100 is modified to N6-(pyridoxal phosphate)lysine. 282–292 (LDIGGGLGVDY) serves as a coordination point for substrate.

This sequence belongs to the Orn/Lys/Arg decarboxylase class-II family. SpeA subfamily. Requires Mg(2+) as cofactor. The cofactor is pyridoxal 5'-phosphate.

It catalyses the reaction L-arginine + H(+) = agmatine + CO2. It functions in the pathway amine and polyamine biosynthesis; agmatine biosynthesis; agmatine from L-arginine: step 1/1. Functionally, catalyzes the biosynthesis of agmatine from arginine. This chain is Biosynthetic arginine decarboxylase, found in Trichlorobacter lovleyi (strain ATCC BAA-1151 / DSM 17278 / SZ) (Geobacter lovleyi).